We begin with the raw amino-acid sequence, 545 residues long: MKTNYIFVTGGVVSSLGKGIAAASLAAILEARGLNVTIMKLDPYINVDPGTMSPIQHGEVFVTEDGAETDLDLGHYERFIRTKMTRRNNFTTGRVYSEVLRKERRGDYLGATVQVIPHITNEIKDRIISGGEGHDVVLVEVGGTVGDIESLPFLEAIRQMAVEVGREHTLYLHLTLVPYLAAAGEVKTKPTQHSVKELLSIGIQPDILICRSDRVIPANERAKIALFCNVPEKAVISLKDVDSIYKIPGLLKSQGLDDYICKRFSLDCPEANLSEWEQVIYEEANPSGEVTIGMVGKYVELPDAYKSVIEALKHGGLKNRLTVNIKLLDSQDVETRGVELLKGLDAILVPGGFGGRGVEGKIMTARYARENNIPYLGICLGMQVALIEFSRHVAGLEKASSTEFEPDCRLPVVGLITEWRDEDGNLEVRSEESDLGGTMRVGGQPCHLTKDSLVRTLYGADTIVERHRHRYEVNNLLLKRIEDAGLRVAGRSVDNKLVEIIEIPDHPWFVACQFHPEFTSTPRDGHPLFTGFVKAAGKYQKGQLK.

Residues M1 to L266 are amidoligase domain. Residue S14 coordinates CTP. Residue S14 coordinates UTP. ATP-binding positions include S15–I20 and D72. Residues D72 and E140 each coordinate Mg(2+). CTP-binding positions include D147–E149, K187–Q192, and K223. UTP-binding positions include K187–Q192 and K223. K239–V241 provides a ligand contact to ATP. The 252-residue stretch at T291–G542 folds into the Glutamine amidotransferase type-1 domain. Residue G352 coordinates L-glutamine. Catalysis depends on C379, which acts as the Nucleophile; for glutamine hydrolysis. L-glutamine is bound by residues L380–Q383, E403, and R470. Active-site residues include H515 and E517.

The protein belongs to the CTP synthase family. In terms of assembly, homotetramer.

The catalysed reaction is UTP + L-glutamine + ATP + H2O = CTP + L-glutamate + ADP + phosphate + 2 H(+). The enzyme catalyses L-glutamine + H2O = L-glutamate + NH4(+). It carries out the reaction UTP + NH4(+) + ATP = CTP + ADP + phosphate + 2 H(+). It functions in the pathway pyrimidine metabolism; CTP biosynthesis via de novo pathway; CTP from UDP: step 2/2. Allosterically activated by GTP, when glutamine is the substrate; GTP has no effect on the reaction when ammonia is the substrate. The allosteric effector GTP functions by stabilizing the protein conformation that binds the tetrahedral intermediate(s) formed during glutamine hydrolysis. Inhibited by the product CTP, via allosteric rather than competitive inhibition. In terms of biological role, catalyzes the ATP-dependent amination of UTP to CTP with either L-glutamine or ammonia as the source of nitrogen. Regulates intracellular CTP levels through interactions with the four ribonucleotide triphosphates. In Photorhabdus laumondii subsp. laumondii (strain DSM 15139 / CIP 105565 / TT01) (Photorhabdus luminescens subsp. laumondii), this protein is CTP synthase.